A 306-amino-acid chain; its full sequence is Non-specific ribonucleoside hydrolase RihC (306 aa).

The active site involves His-235.

The protein belongs to the IUNH family. RihC subfamily.

In terms of biological role, hydrolyzes both purine and pyrimidine ribonucleosides with a broad-substrate specificity. This chain is Non-specific ribonucleoside hydrolase RihC, found in Salmonella agona (strain SL483).